Reading from the N-terminus, the 204-residue chain is uncharacterized protein (204 aa).

This is an uncharacterized protein from Caenorhabditis elegans.